We begin with the raw amino-acid sequence, 131 residues long: Profilin (131 aa).

This sequence belongs to the profilin family. Occurs in many kinds of cells as a complex with monomeric actin in a 1:1 ratio.

Its subcellular location is the cytoplasm. It localises to the cytoskeleton. Its function is as follows. Binds to actin and affects the structure of the cytoskeleton. At high concentrations, profilin prevents the polymerization of actin, whereas it enhances it at low concentrations. By binding to PIP2, it inhibits the formation of IP3 and DG. This is Profilin from Citrus sinensis (Sweet orange).